A 212-amino-acid chain; its full sequence is Glutathione S-transferase P 1 (212 aa).

Positions 2-83 (PGYVLTYFPV…YLGNKHGLTG (82 aa)) constitute a GST N-terminal domain. Glutathione contacts are provided by residues Y8, R14, W39, K47, 54-55 (QL), and 67-68 (QS). In terms of domain architecture, GST C-terminal spans 85 to 206 (NDEERGHIDM…KSDARNKRPI (122 aa)).

The protein belongs to the GST superfamily. Pi family. Homodimer. In terms of tissue distribution, expressed only in embryos. Not expressed in liver, lung, heart, kidney and ovary.

It is found in the cytoplasm. It localises to the mitochondrion. Its subcellular location is the nucleus. It carries out the reaction RX + glutathione = an S-substituted glutathione + a halide anion + H(+). Its function is as follows. Conjugation of reduced glutathione to a wide number of exogenous and endogenous hydrophobic electrophiles. Highly active towards 1-chloro-2,4-dinitrobenzene and organic isothiocyanates, but shows no detectable activity towards 1,2-dichloro-4-nitrobenzene, p-nitrobenzylchloride, trans-4-phenyl-3-buten-2-one (tPBO) and ethacrynic acid. May be associated with cellular proliferation. The sequence is that of Glutathione S-transferase P 1 (gstp1) from Xenopus laevis (African clawed frog).